The following is a 362-amino-acid chain: tRNA-specific 2-thiouridylase MnmA (362 aa).

Residues 8-15 (AMSGGVDS) and methionine 35 each bind ATP. The tract at residues 95–97 (NPD) is interaction with target base in tRNA. Cysteine 100 (nucleophile) is an active-site residue. Cysteine 100 and cysteine 196 form a disulfide bridge. Residue glycine 124 participates in ATP binding. Positions 146 to 148 (KDQ) are interaction with tRNA. The active-site Cysteine persulfide intermediate is cysteine 196. Residues 303–304 (RY) form an interaction with tRNA region.

It belongs to the MnmA/TRMU family.

The protein localises to the cytoplasm. It carries out the reaction S-sulfanyl-L-cysteinyl-[protein] + uridine(34) in tRNA + AH2 + ATP = 2-thiouridine(34) in tRNA + L-cysteinyl-[protein] + A + AMP + diphosphate + H(+). Its function is as follows. Catalyzes the 2-thiolation of uridine at the wobble position (U34) of tRNA, leading to the formation of s(2)U34. The sequence is that of tRNA-specific 2-thiouridylase MnmA from Chlamydia abortus (strain DSM 27085 / S26/3) (Chlamydophila abortus).